The primary structure comprises 86 residues: F(1)-ATPase inhibitor STF1, mitochondrial (86 aa).

The transit peptide at 1-23 directs the protein to the mitochondrion; it reads MLNRCISRNTRLPVNLRIASRFY. At Ser-24 the chain carries Phosphoserine.

Belongs to the ATPase inhibitor family. In terms of assembly, monomer and homodimer. Monomeric at pH 5.0 and dimeric at either pH 6.5 or 8.0. The protein aggregates increasingly strongly with increasing pH.

The protein localises to the mitochondrion. Endogenous low-affinity ATPase inhibitor, which inhibits specifically the reverse ATPase reaction of mitochondrial F(1)F(0)-type ATP synthase. Found to stabilize, together with STF2, a complex of intrinsic ATPase inhibitor INH1 and proton-translocating ATPase in mitochondrial membranes. Binds directly to purified F1-ATPase. The sequence is that of F(1)-ATPase inhibitor STF1, mitochondrial (STF1) from Saccharomyces cerevisiae (strain ATCC 204508 / S288c) (Baker's yeast).